The primary structure comprises 264 residues: Interleukin-33 (264 aa).

The homeodomain-like HTH domain stretch occupies residues 1–67; it reads MRPRMKYSNS…ETCYFGKEPA (67 aa). A propeptide spanning residues 1–101 is cleaved from the precursor; it reads MRPRMKYSNS…RSLLGSIQAF (101 aa). Residues 66–108 are interaction with RELA; it reads PAKRYSLKSGSKHEGRLSTCLPDSRKRSLLGSIQAFAASVDTL.

Belongs to the IL-1 family. Highly divergent. Forms a 1:1:1 heterotrimeric complex with its primary high-affinity receptor IL1RL1 and the coreceptor IL1RAP. Interacts with cargo receptor TMED10; the interaction mediates the translocation from the cytoplasm into the ERGIC (endoplasmic reticulum-Golgi intermediate compartment) and thereby secretion. In terms of processing, the full-length protein can be released from cells and is able to signal via the IL1RL1/ST2 receptor. However, proteolytic processing by CELA1, CSTG/cathepsin G and ELANE/neutrophil elastase produces C-terminal peptides that are more active than the unprocessed full-length protein. May also be proteolytically processed by calpains. Proteolytic cleavage mediated by apoptotic caspases including CASP3 and CASP7 results in IL33 inactivation. In vitro proteolytic cleavage by CASP1 was reported but could not be confirmed in vivo suggesting that IL33 is probably not a direct substrate for that caspase.

The protein resides in the nucleus. Its subcellular location is the chromosome. The protein localises to the cytoplasm. It localises to the cytoplasmic vesicle. It is found in the secretory vesicle. The protein resides in the secreted. Cytokine that binds to and signals through the IL1RL1/ST2 receptor which in turn activates NF-kappa-B and MAPK signaling pathways in target cells. Involved in the maturation of Th2 cells inducing the secretion of T-helper type 2-associated cytokines. Also involved in activation of mast cells, basophils, eosinophils and natural killer cells. Acts as a chemoattractant for Th2 cells, and may function as an 'alarmin', that amplifies immune responses during tissue injury. Induces rapid UCP2-dependent mitochondrial rewiring that attenuates the generation of reactive oxygen species and preserves the integrity of Krebs cycle required for persistent production of itaconate and subsequent GATA3-dependent differentiation of inflammation-resolving alternatively activated macrophages. Its function is as follows. In quiescent endothelia the uncleaved form is constitutively and abundantly expressed, and acts as a chromatin-associated nuclear factor with transcriptional repressor properties, it may sequester nuclear NF-kappaB/RELA, lowering expression of its targets. This form is rapidely lost upon angiogenic or pro-inflammatory activation. The sequence is that of Interleukin-33 from Rattus norvegicus (Rat).